We begin with the raw amino-acid sequence, 302 residues long: MSNALYQSSISSLPLLGHGKVRDNYAVGEDKLLIVTTDRLSAFDVIMGEPIPDKGRVLNQMANFWFRKLAHIVPNHETGVAAETVVAPAEVEQVKGRAVVVKRLKPILVEAVVRGYLAGSGWKDYQATGKVCGIELPAGLQNAQKLPEPIFTPAAKAEMGEHDENISFGEVEERIGIALARQMRDISIRLYKEAAEFAATRGIIIADTKFEFGLDENGTLTLMDEVLTADSSRFWPADSYQVGTNPPSFDKQFVRDWLEAVRIDGKPWPKTAPAPKLPDDVIEKTAAKYREALTRLTGEELQ.

It belongs to the SAICAR synthetase family.

It catalyses the reaction 5-amino-1-(5-phospho-D-ribosyl)imidazole-4-carboxylate + L-aspartate + ATP = (2S)-2-[5-amino-1-(5-phospho-beta-D-ribosyl)imidazole-4-carboxamido]succinate + ADP + phosphate + 2 H(+). The protein operates within purine metabolism; IMP biosynthesis via de novo pathway; 5-amino-1-(5-phospho-D-ribosyl)imidazole-4-carboxamide from 5-amino-1-(5-phospho-D-ribosyl)imidazole-4-carboxylate: step 1/2. The chain is Phosphoribosylaminoimidazole-succinocarboxamide synthase from Cupriavidus pinatubonensis (strain JMP 134 / LMG 1197) (Cupriavidus necator (strain JMP 134)).